Here is a 274-residue protein sequence, read N- to C-terminus: Large ribosomal subunit protein uL2c (274 aa).

2 disordered regions span residues 1–22 and 225–254; these read MAIHLYKTSTPSTRNGAVDSQV and PVDHPHGGGEGRAPIGRKKPVTPWGYPALG.

The protein belongs to the universal ribosomal protein uL2 family. Part of the 50S ribosomal subunit.

It is found in the plastid. The protein localises to the chloroplast. In Sinapis alba (White mustard), this protein is Large ribosomal subunit protein uL2c (rpl2).